Here is a 134-residue protein sequence, read N- to C-terminus: Replication enhancer protein (134 aa).

The protein belongs to the geminiviridae replication enhancer protein family. In terms of assembly, homooligomer. Interacts with the replication-associated protein (REP). Interacts with host proliferating cell nuclear antigen (PCNA). Interacts with host retinoblastoma-related protein 1 (RBR1), and may thereby deregulate the host cell cycle. Oligomerization and interaction with PCNA are necessary for optimal replication enhancement.

In terms of biological role, increases viral DNA accumulation. Enhances infectivity and symptom expression. The protein is Replication enhancer protein of Solanum lycopersicum (Tomato).